Reading from the N-terminus, the 313-residue chain is ADP-L-glycero-D-manno-heptose-6-epimerase (313 aa).

NADP(+) contacts are provided by residues 10 to 11 (MI), 31 to 32 (DN), Lys38, Lys53, 75 to 79 (EGACS), and Asn92. Catalysis depends on Tyr139, which acts as the Proton acceptor. Residue Lys143 coordinates NADP(+). Residue Asn174 coordinates substrate. Residues Val175 and Lys183 each contribute to the NADP(+) site. Catalysis depends on Lys183, which acts as the Proton acceptor. Substrate is bound by residues Ser185, His192, 206–209 (FEGS), Arg214, and Tyr277.

The protein belongs to the NAD(P)-dependent epimerase/dehydratase family. HldD subfamily. In terms of assembly, homopentamer. NADP(+) serves as cofactor.

It carries out the reaction ADP-D-glycero-beta-D-manno-heptose = ADP-L-glycero-beta-D-manno-heptose. It functions in the pathway nucleotide-sugar biosynthesis; ADP-L-glycero-beta-D-manno-heptose biosynthesis; ADP-L-glycero-beta-D-manno-heptose from D-glycero-beta-D-manno-heptose 7-phosphate: step 4/4. Catalyzes the interconversion between ADP-D-glycero-beta-D-manno-heptose and ADP-L-glycero-beta-D-manno-heptose via an epimerization at carbon 6 of the heptose. The polypeptide is ADP-L-glycero-D-manno-heptose-6-epimerase (Aliivibrio fischeri (strain MJ11) (Vibrio fischeri)).